Consider the following 146-residue polypeptide: Phospho-2-dehydro-3-deoxyheptonate aldolase (146 aa).

The protein belongs to the class-II DAHP synthase family. In terms of assembly, homodimer.

The enzyme catalyses D-erythrose 4-phosphate + phosphoenolpyruvate + H2O = 7-phospho-2-dehydro-3-deoxy-D-arabino-heptonate + phosphate. Its pathway is metabolic intermediate biosynthesis; chorismate biosynthesis; chorismate from D-erythrose 4-phosphate and phosphoenolpyruvate: step 1/7. The sequence is that of Phospho-2-dehydro-3-deoxyheptonate aldolase from Streptomyces lividans.